The sequence spans 266 residues: Single-stranded DNA-binding protein WHY1, chloroplastic (266 aa).

Residues 1 to 37 constitute a chloroplast transit peptide; sequence MPPPAPLFLSLASTPPPALMPVHHPRAPQSLTLVPPV. The disordered stretch occupies residues 53 to 81; that stretch reads SPRHSDYFDPRAPPPPRGDGGYGRPPNGA. Positions 94–99 are required for ssDNA binding; that stretch reads KGKAAL. Positions 172-185 match the Nuclear localization signal motif; that stretch reads KGRSEEGKVRKVLK.

It belongs to the Whirly family. As to quaternary structure, homotetramer.

It localises to the plastid. The protein resides in the chloroplast stroma. It is found in the nucleus. Functionally, single-stranded DNA and RNA binding protein that maintains plastid genome stability by preventing break-induced and short homology-dependent illegitimate recombinations. Functions in RNA metabolism and is involved in the maturation of the atpF and 23S ribosomal RNAs. In Zea mays (Maize), this protein is Single-stranded DNA-binding protein WHY1, chloroplastic (WHY1).